The primary structure comprises 419 residues: eIF5-mimic protein 2-A (419 aa).

Residues 1-15 (MNNQKQQKPTLTGQR) are compositionally biased toward polar residues. Positions 1 to 29 (MNNQKQQKPTLTGQRFKTRKRDEKERFDP) are disordered. The W2 domain maps to 247–414 (NQQSIGARKE…KNAEEESESE (168 aa)).

Belongs to the BZW family.

Translation initiation regulator which may repress repeat-associated non-AUG (RAN) initiated translation probably by acting as a competitive inhibitor of eukaryotic translation initiation factor 5 (EIF5) function. Enhances histone H4 gene transcription but does not seem to bind DNA directly. The chain is eIF5-mimic protein 2-A (bzw1a) from Danio rerio (Zebrafish).